Consider the following 876-residue polypeptide: Alanine--tRNA ligase (876 aa).

Positions 568, 572, 669, and 673 each coordinate Zn(2+).

The protein belongs to the class-II aminoacyl-tRNA synthetase family. The cofactor is Zn(2+).

The protein localises to the cytoplasm. The catalysed reaction is tRNA(Ala) + L-alanine + ATP = L-alanyl-tRNA(Ala) + AMP + diphosphate. Catalyzes the attachment of alanine to tRNA(Ala) in a two-step reaction: alanine is first activated by ATP to form Ala-AMP and then transferred to the acceptor end of tRNA(Ala). Also edits incorrectly charged Ser-tRNA(Ala) and Gly-tRNA(Ala) via its editing domain. The chain is Alanine--tRNA ligase from Sulfurihydrogenibium sp. (strain YO3AOP1).